The following is a 451-amino-acid chain: Kynureninase (451 aa).

Pyridoxal 5'-phosphate-binding positions include Leu131, Ser132, 159–162 (FPSD), Ser215, Asp244, His247, and Tyr269. N6-(pyridoxal phosphate)lysine is present on Lys270. Trp303 and Asn331 together coordinate pyridoxal 5'-phosphate.

It belongs to the kynureninase family. Homodimer. It depends on pyridoxal 5'-phosphate as a cofactor.

It is found in the cytoplasm. The catalysed reaction is L-kynurenine + H2O = anthranilate + L-alanine + H(+). It catalyses the reaction 3-hydroxy-L-kynurenine + H2O = 3-hydroxyanthranilate + L-alanine + H(+). The protein operates within amino-acid degradation; L-kynurenine degradation; L-alanine and anthranilate from L-kynurenine: step 1/1. It participates in cofactor biosynthesis; NAD(+) biosynthesis; quinolinate from L-kynurenine: step 2/3. In terms of biological role, catalyzes the cleavage of L-kynurenine (L-Kyn) and L-3-hydroxykynurenine (L-3OHKyn) into anthranilic acid (AA) and 3-hydroxyanthranilic acid (3-OHAA), respectively. The sequence is that of Kynureninase from Dictyostelium discoideum (Social amoeba).